Reading from the N-terminus, the 864-residue chain is Valine--tRNA ligase (864 aa).

Positions 42-52 (PTISGKLHIGH) match the 'HIGH' region motif. The 'KMSKS' region signature appears at 589–593 (KMSKS). K592 lines the ATP pocket.

The protein belongs to the class-I aminoacyl-tRNA synthetase family. ValS type 2 subfamily. In terms of assembly, monomer.

The protein localises to the cytoplasm. It carries out the reaction tRNA(Val) + L-valine + ATP = L-valyl-tRNA(Val) + AMP + diphosphate. Catalyzes the attachment of valine to tRNA(Val). As ValRS can inadvertently accommodate and process structurally similar amino acids such as threonine, to avoid such errors, it has a 'posttransfer' editing activity that hydrolyzes mischarged Thr-tRNA(Val) in a tRNA-dependent manner. This is Valine--tRNA ligase from Wolbachia pipientis wMel.